Reading from the N-terminus, the 158-residue chain is NAD(P)H-quinone oxidoreductase subunit J, chloroplastic (158 aa).

The protein belongs to the complex I 30 kDa subunit family. As to quaternary structure, NDH is composed of at least 16 different subunits, 5 of which are encoded in the nucleus.

It localises to the plastid. It is found in the chloroplast thylakoid membrane. The catalysed reaction is a plastoquinone + NADH + (n+1) H(+)(in) = a plastoquinol + NAD(+) + n H(+)(out). The enzyme catalyses a plastoquinone + NADPH + (n+1) H(+)(in) = a plastoquinol + NADP(+) + n H(+)(out). Its function is as follows. NDH shuttles electrons from NAD(P)H:plastoquinone, via FMN and iron-sulfur (Fe-S) centers, to quinones in the photosynthetic chain and possibly in a chloroplast respiratory chain. The immediate electron acceptor for the enzyme in this species is believed to be plastoquinone. Couples the redox reaction to proton translocation, and thus conserves the redox energy in a proton gradient. This is NAD(P)H-quinone oxidoreductase subunit J, chloroplastic from Angiopteris evecta (Mule's foot fern).